The chain runs to 119 residues: Large ribosomal subunit protein uL22 (119 aa).

It belongs to the universal ribosomal protein uL22 family. In terms of assembly, part of the 50S ribosomal subunit.

Its function is as follows. This protein binds specifically to 23S rRNA; its binding is stimulated by other ribosomal proteins, e.g. L4, L17, and L20. It is important during the early stages of 50S assembly. It makes multiple contacts with different domains of the 23S rRNA in the assembled 50S subunit and ribosome. The globular domain of the protein is located near the polypeptide exit tunnel on the outside of the subunit, while an extended beta-hairpin is found that lines the wall of the exit tunnel in the center of the 70S ribosome. The chain is Large ribosomal subunit protein uL22 from Rhodopirellula baltica (strain DSM 10527 / NCIMB 13988 / SH1).